The following is a 513-amino-acid chain: GMP synthase [glutamine-hydrolyzing] (513 aa).

In terms of domain architecture, Glutamine amidotransferase type-1 spans Met8–Lys198. Cys85 acts as the Nucleophile in catalysis. Residues His172 and Glu174 contribute to the active site. In terms of domain architecture, GMPS ATP-PPase spans Trp199–Arg388. Residue Ser226 to Ser232 participates in ATP binding.

Homodimer.

The catalysed reaction is XMP + L-glutamine + ATP + H2O = GMP + L-glutamate + AMP + diphosphate + 2 H(+). The protein operates within purine metabolism; GMP biosynthesis; GMP from XMP (L-Gln route): step 1/1. Functionally, catalyzes the synthesis of GMP from XMP. In Bacillus velezensis (strain DSM 23117 / BGSC 10A6 / LMG 26770 / FZB42) (Bacillus amyloliquefaciens subsp. plantarum), this protein is GMP synthase [glutamine-hydrolyzing].